The primary structure comprises 269 residues: 4-hydroxy-tetrahydrodipicolinate reductase (269 aa).

Residues 9 to 14 and Glu-35 each bind NAD(+); that span reads GAGGRM. Arg-36 lines the NADP(+) pocket. Residues 98–100 and 122–125 each bind NAD(+); these read GTT and ASNY. Residue His-155 is the Proton donor/acceptor of the active site. (S)-2,3,4,5-tetrahydrodipicolinate is bound at residue His-156. Lys-159 (proton donor) is an active-site residue. Residue 165–166 coordinates (S)-2,3,4,5-tetrahydrodipicolinate; sequence GT.

Belongs to the DapB family.

Its subcellular location is the cytoplasm. The enzyme catalyses (S)-2,3,4,5-tetrahydrodipicolinate + NAD(+) + H2O = (2S,4S)-4-hydroxy-2,3,4,5-tetrahydrodipicolinate + NADH + H(+). It catalyses the reaction (S)-2,3,4,5-tetrahydrodipicolinate + NADP(+) + H2O = (2S,4S)-4-hydroxy-2,3,4,5-tetrahydrodipicolinate + NADPH + H(+). It functions in the pathway amino-acid biosynthesis; L-lysine biosynthesis via DAP pathway; (S)-tetrahydrodipicolinate from L-aspartate: step 4/4. Catalyzes the conversion of 4-hydroxy-tetrahydrodipicolinate (HTPA) to tetrahydrodipicolinate. In Actinobacillus pleuropneumoniae serotype 3 (strain JL03), this protein is 4-hydroxy-tetrahydrodipicolinate reductase.